A 61-amino-acid polypeptide reads, in one-letter code: Bowman-Birk type proteinase inhibitor (61 aa).

Disulfide bonds link Cys-4–Cys-57, Cys-5–Cys-20, Cys-8–Cys-53, Cys-10–Cys-18, Cys-27–Cys-34, Cys-31–Cys-46, and Cys-36–Cys-44.

The protein belongs to the Bowman-Birk serine protease inhibitor family.

Functionally, strong inhibitor of trypsin with a 1:1 stoichiometry. Weaker inhibitor of chymotrypsin. This Erythrina variegata (Indian coral tree) protein is Bowman-Birk type proteinase inhibitor.